Consider the following 377-residue polypeptide: UPF0754 membrane protein GTNG_0550 (377 aa).

Helical transmembrane passes span 7 to 27 (LLFM…IAIV) and 357 to 377 (YLGA…GLWL).

Belongs to the UPF0754 family.

It localises to the cell membrane. This is UPF0754 membrane protein GTNG_0550 from Geobacillus thermodenitrificans (strain NG80-2).